Here is an 867-residue protein sequence, read N- to C-terminus: DNA endonuclease RBBP8 (867 aa).

Residues 25-48 (ELWSKLKECHDKELQELLLKINKL) are essential for binding to the MRN complex and for RPA focus formation on DNA damage. Coiled-coil stretches lie at residues 38–87 (LQEL…EDRL) and 120–141 (ITELMNDKNALQDENKRLSEQL). Disordered stretches follow at residues 141–171 (LHNMQKSRWKSDEENPADTGEGEDGVIPDSP) and 448–486 (RYGKRKNAEAEQEESCESSFDKENNIPIKDIGSERHSML). Residues 154-166 (ENPADTGEGEDGV) show a composition bias toward acidic residues. The PXDLS motif motif lies at 489–493 (PLDLS). The damage-recruitment motif stretch occupies residues 508 to 531 (SSRGRTKQTFALVPEKPDPKKPLH). Phosphothreonine occurs at positions 817 and 829. Residues 843 to 867 (SPCQRPRRRQPYNAKFSSKIKEQKT) form a disordered region.

This sequence belongs to the COM1/SAE2/CtIP family. As to quaternary structure, homotetramer; formed by antiparallel association of helical extensions protruding from the N-termini of two parallel coiled-coil dimers. Interacts with the MRN complex; the interaction links DNA sensing to resection. Interacts with samhd1. In terms of processing, phosphorylation at Thr-817 and Thr-829 promote interaction with nbn and recruitment to double-strand breaks (DSBs).

Its subcellular location is the nucleus. The protein resides in the chromosome. Endonuclease that cooperates with the MRE11-RAD50-NBN (MRN) complex in DNA-end resection, the first step of double-strand break (DSB) repair through the homologous recombination (HR) pathway. Functions downstream of the MRN complex and ATM, promotes ATR activation and its recruitment to DSBs in the S/G2 phase facilitating the generation of ssDNA. Specifically promotes the endonuclease activity of the MRN complex to clear DNA ends containing protein adducts: recruited to DSBs by nbn following phosphorylation, and promotes the endonuclease of mre11 to clear protein-DNA adducts and generate clean double-strand break ends. In Xenopus tropicalis (Western clawed frog), this protein is DNA endonuclease RBBP8 (rbbp8).